We begin with the raw amino-acid sequence, 280 residues long: Truncated lectin 2 (280 aa).

The first 26 residues, 1 to 26, serve as a signal peptide directing secretion; it reads MSSSNFSCILSISLTFFILLLNKVNS. The Mn(2+) site is built by glutamate 148 and aspartate 150. Positions 150, 152, 154, and 158 each coordinate Ca(2+). Aspartate 158 is a binding site for Mn(2+). A glycan (N-linked (GlcNAc...) asparagine) is linked at asparagine 163. Histidine 170 contacts Mn(2+). An N-linked (GlcNAc...) asparagine glycan is attached at asparagine 272.

This sequence belongs to the leguminous lectin family.

In Medicago truncatula (Barrel medic), this protein is Truncated lectin 2 (LEC2).